A 376-amino-acid polypeptide reads, in one-letter code: Glucose-1-phosphate adenylyltransferase (376 aa).

Alpha-D-glucose 1-phosphate is bound by residues tyrosine 101, glycine 166, glutamate 181–lysine 182, and serine 192.

Belongs to the bacterial/plant glucose-1-phosphate adenylyltransferase family. As to quaternary structure, homotetramer.

It catalyses the reaction alpha-D-glucose 1-phosphate + ATP + H(+) = ADP-alpha-D-glucose + diphosphate. It participates in glycan biosynthesis; glycogen biosynthesis. Functionally, involved in the biosynthesis of ADP-glucose, a building block required for the elongation reactions to produce glycogen. Catalyzes the reaction between ATP and alpha-D-glucose 1-phosphate (G1P) to produce pyrophosphate and ADP-Glc. The chain is Glucose-1-phosphate adenylyltransferase from Bacillus thuringiensis (strain Al Hakam).